A 292-amino-acid chain; its full sequence is UPF0696 protein C11orf68 homolog (292 aa).

The segment covering 1-10 has biased composition (low complexity); that stretch reads MAAAAAAVAG. Residues 1–60 form a disordered region; sequence MAAAAAAVAGAGRGGGGGADPGQERSRARSWVGAERSEGRRMEPNEELEEEDSPGGREDG. The segment covering 11–20 has biased composition (gly residues); the sequence is AGRGGGGGAD. Over residues 35–44 the composition is skewed to basic and acidic residues; the sequence is ERSEGRRMEP.

The protein belongs to the UPF0696 family.

The protein is UPF0696 protein C11orf68 homolog (Bles03) of Rattus norvegicus (Rat).